An 84-amino-acid polypeptide reads, in one-letter code: Metallothionein type 2b (84 aa).

Belongs to the metallothionein superfamily. Type 15 family. In terms of tissue distribution, expressed in leaves, stems and roots.

Its subcellular location is the cytoplasm. The protein resides in the nucleus. Metallothioneins have a high content of cysteine residues that bind various heavy metals. Probably involved in maintaining homeostasis of essential transition metals and detoxification of toxic metals. Increases cadmium and zinc tolerance when expressed in heterologous systems. Metal chelator binding 6 cadmium or 5 zinc atoms per protein. The protein is Metallothionein type 2b of Colocasia esculenta (Wild taro).